The following is a 309-amino-acid chain: Vomeronasal type-1 receptor 52 (309 aa).

Residues 1–19 are Extracellular-facing; that stretch reads MNKDHTLYCSVYIRNAFFS. A helical membrane pass occupies residues 20–40; the sequence is EIGIGISANSCLLLFHTFMFI. Residues 41-49 lie on the Cytoplasmic side of the membrane; that stretch reads RGHRPRLTD. Residues 50 to 70 traverse the membrane as a helical segment; that stretch reads LPIGFVALIHLVMLLLAAYIT. Over 71–93 the chain is Extracellular; it reads EDFFMSSGGWDDITCKLVIFLHR. A disulfide bond links cysteine 85 and cysteine 172. A helical membrane pass occupies residues 94 to 114; that stretch reads FFRSLSVCATCLLSVFQAIIL. Residues 115–134 lie on the Cytoplasmic side of the membrane; that stretch reads CPQSSHLAKLKQNSPHQLSY. Residues 135-155 traverse the membrane as a helical segment; that stretch reads FFIFLSIFYTSISSHILIAAI. Residues 156–187 lie on the Extracellular side of the membrane; sequence PTQNITFVNLIYITNSCSFLPLSSSMQHTFST. A glycan (N-linked (GlcNAc...) asparagine) is linked at asparagine 159. Residues 188–208 traverse the membrane as a helical segment; the sequence is LLAFRNVFVIGLMGLSTCYMA. The Cytoplasmic portion of the chain corresponds to 209–238; that stretch reads TLLCRHKTRSQRLQNSKLSPKATPEQRALR. Residues 239–259 form a helical membrane-spanning segment; it reads TILMLMSFFLLMSTFDSIISY. Topologically, residues 260-268 are extracellular; it reads SRTILQGNP. Residues 269–289 traverse the membrane as a helical segment; sequence LPFCFQILVAHSYAAVSPLLV. Topologically, residues 290–309 are cytoplasmic; sequence LSNEKRITNLLISMYEKIVL.

Belongs to the G-protein coupled receptor 1 family.

It localises to the cell membrane. Putative pheromone receptor implicated in the regulation of social and reproductive behavior. The sequence is that of Vomeronasal type-1 receptor 52 (Vmn1r52) from Mus musculus (Mouse).